We begin with the raw amino-acid sequence, 707 residues long: Choline transporter-like protein 4 (707 aa).

Residues 1 to 32 (MGRKQNENEAHGNSAKYDPSFRGPIKNRGCTD) are Cytoplasmic-facing. Residues 33-53 (IICCVLFLIFILGYIIVGLVA) form a helical membrane-spanning segment. The Extracellular segment spans residues 54–227 (WVYGDPRQVL…KIFEDFAQSW (174 aa)). 4 N-linked (GlcNAc...) asparagine glycosylation sites follow: N67, N185, N195, and N196. A helical transmembrane segment spans residues 228 to 248 (YWILVALGVALALSLLFILLL). Topologically, residues 249–250 (RL) are cytoplasmic. Residues 251–271 (VAAPLVLLLIVGVLAVLAYGI) form a helical membrane-spanning segment. At 272-307 (YHCWQQYQVFRDKGASITQLGFTTNFSAYQSVKETW) the chain is on the extracellular side. N296 is a glycosylation site (N-linked (GlcNAc...) asparagine). A helical transmembrane segment spans residues 308 to 328 (LAALIVLAVLEGILLLMLIFL). Residues 329 to 356 (RQRIRIAIALLKEASRAVGQMMSTMFYP) are Cytoplasmic-facing. A helical transmembrane segment spans residues 357–377 (LVTFVLLVICIGYWAVTALYL). Residues 378–452 (ATSGQPQYIY…GVLGLFWTVN (75 aa)) are Extracellular-facing. Residues N391, N403, and N413 are each glycosylated (N-linked (GlcNAc...) asparagine). A helical transmembrane segment spans residues 453–473 (WVLALGQCVLAGAFASFYWAF). Over 474–498 (HKPRDIPTFPLSSAFIRTLRYHTGS) the chain is Cytoplasmic. The chain crosses the membrane as a helical span at residues 499–519 (LAFGALILSLVQIARVILEYI). Residues 520–557 (DHKLRGSQNPVARCIICCFKCCLWCLEKFIKFLNRNAY) lie on the Extracellular side of the membrane. The helical transmembrane segment at 558-578 (IMIAIYGKNFCVSAKNAFMLL) threads the bilayer. The Cytoplasmic portion of the chain corresponds to 579–594 (MRNVLRVVVLDKVTDL). The helical transmembrane segment at 595-615 (LLFFGKLLVVGGVGVLSFFFF) threads the bilayer. Residues 616–635 (SGRIKGLGKDFENPNLNYYW) are Extracellular-facing. A helical transmembrane segment spans residues 636–656 (LPIMTSIMGAYVIASGFFSVF). Residues 657–707 (GMCVDTLFLCFLEDLERNDGSQERPYYMPKALLKILGKKNEAPTGGKTRKK) lie on the Cytoplasmic side of the membrane.

The protein belongs to the CTL (choline transporter-like) family. In terms of processing, N-glycosylated; N-glycosylation of Asn-67 and Asn-391 is required for a proper thiamine pyrophosphate uptake. As to expression, expressed in colon and cecum.

It localises to the membrane. The protein localises to the apical cell membrane. It carries out the reaction choline(out) + n H(+)(in) = choline(in) + n H(+)(out). The enzyme catalyses thiamine diphosphate(out) = thiamine diphosphate(in). Its function is as follows. Choline transporter that plays a role in the choline-acetylcholine system and is required to the efferent innervation of hair cells in the olivocochlear bundle for the maintenance of physiological function of outer hair cells and the protection of hair cells from acoustic injury. Also described as a thiamine pyrophosphate transporter in colon, may mediate the absorption of microbiota-generated thiamine pyrophosphate and contribute to host thiamine (vitamin B1) homeostasis. The sequence is that of Choline transporter-like protein 4 from Mus musculus (Mouse).